A 224-amino-acid polypeptide reads, in one-letter code: Attacin-A (224 aa).

The signal sequence occupies residues 1–20 (MQKTSILIVALVALFAITEA). Residues 21 to 34 (LPSLPTTGPIRVRR) constitute a propeptide that is removed on maturation.

Belongs to the attacin/sarcotoxin-2 family. Hemolymph (at protein level).

It is found in the secreted. Its function is as follows. Hemolymph antibacterial protein. This Drosophila melanogaster (Fruit fly) protein is Attacin-A (AttA).